A 110-amino-acid polypeptide reads, in one-letter code: U1-lycotoxin-Ls1ii (110 aa).

An N-terminal signal peptide occupies residues 1–20 (MKFVLLFGVLLVTLFSYSSA). Positions 21–44 (EMLDDFDQADEDELLSLIEKEEAR) are excised as a propeptide. Cystine bridges form between Cys47-Cys62, Cys54-Cys71, Cys61-Cys89, and Cys73-Cys87.

The protein belongs to the neurotoxin 19 (CSTX) family. 03 subfamily. In terms of tissue distribution, expressed by the venom gland.

It localises to the secreted. The sequence is that of U1-lycotoxin-Ls1ii from Lycosa singoriensis (Wolf spider).